We begin with the raw amino-acid sequence, 327 residues long: Ribosomal RNA small subunit methyltransferase H (327 aa).

Residues 37 to 39, D55, F82, D99, and Q106 each bind S-adenosyl-L-methionine; that span reads GGY. Positions 303 to 327 are disordered; that stretch reads IATRTDAPAQPVAPETLGLPQLEGF.

This sequence belongs to the methyltransferase superfamily. RsmH family.

It is found in the cytoplasm. It carries out the reaction cytidine(1402) in 16S rRNA + S-adenosyl-L-methionine = N(4)-methylcytidine(1402) in 16S rRNA + S-adenosyl-L-homocysteine + H(+). In terms of biological role, specifically methylates the N4 position of cytidine in position 1402 (C1402) of 16S rRNA. This Jannaschia sp. (strain CCS1) protein is Ribosomal RNA small subunit methyltransferase H.